Here is a 201-residue protein sequence, read N- to C-terminus: Holliday junction branch migration complex subunit RuvA (201 aa).

A domain I region spans residues 1–64 (MIGRLRGTLA…EDAQLLYGFA (64 aa)). Residues 65-143 (EKRERELFRE…AWESMPAIAT (79 aa)) form a domain II region. The tract at residues 144 to 152 (LVVEPGSKT) is flexible linker. The tract at residues 153-201 (AVTSAENDAVSALISLGFKPQEASRAVSAIQEENLSSEEMIRRALKGMV) is domain III.

It belongs to the RuvA family. In terms of assembly, homotetramer. Forms an RuvA(8)-RuvB(12)-Holliday junction (HJ) complex. HJ DNA is sandwiched between 2 RuvA tetramers; dsDNA enters through RuvA and exits via RuvB. An RuvB hexamer assembles on each DNA strand where it exits the tetramer. Each RuvB hexamer is contacted by two RuvA subunits (via domain III) on 2 adjacent RuvB subunits; this complex drives branch migration. In the full resolvosome a probable DNA-RuvA(4)-RuvB(12)-RuvC(2) complex forms which resolves the HJ.

Its subcellular location is the cytoplasm. The RuvA-RuvB-RuvC complex processes Holliday junction (HJ) DNA during genetic recombination and DNA repair, while the RuvA-RuvB complex plays an important role in the rescue of blocked DNA replication forks via replication fork reversal (RFR). RuvA specifically binds to HJ cruciform DNA, conferring on it an open structure. The RuvB hexamer acts as an ATP-dependent pump, pulling dsDNA into and through the RuvAB complex. HJ branch migration allows RuvC to scan DNA until it finds its consensus sequence, where it cleaves and resolves the cruciform DNA. The polypeptide is Holliday junction branch migration complex subunit RuvA (Stutzerimonas stutzeri (strain A1501) (Pseudomonas stutzeri)).